The primary structure comprises 570 residues: Grayanic acid biosynthesis cluster cytochrome P450 monooxygenase (570 aa).

A helical transmembrane segment spans residues 9-29 (ILTIFWLPIAAAXLYGAGLAI). A glycan (N-linked (GlcNAc...) asparagine) is linked at Asn191. A heme-binding site is contributed by Cys510.

It belongs to the cytochrome P450 family. The cofactor is heme.

It localises to the membrane. Its pathway is secondary metabolite biosynthesis. Functionally, non-reducing polyketide synthase; part of the gene cluster that mediates the biosynthesis of orcinol depsidone grayanic acid (GRA), the only major secondary metabolite known in C.grayi. The first step consists in the ring and depside synthesis by PKS16 leading to 4-O-demethylsphaerophorin, involving different orcinol-like rings, one with acetyl CoA and the other with octanoyl CoA as the starter. Further depsidone formation by the GRA cluster-specific cytochrome P450 leads to 4-O-demethylgrayanic acid. Finally, the cluster specific O-methyltransferase probably converts the 4-O-demethylgrayanic acid into grayanic acid. This chain is Grayanic acid biosynthesis cluster cytochrome P450 monooxygenase, found in Cladonia grayi (Gray's cup lichen).